A 172-amino-acid chain; its full sequence is Male-specific submandibular salivary gland protein (172 aa).

The first 15 residues, 1–15, serve as a signal peptide directing secretion; sequence MVKFLLLALALGVSC. An N-linked (GlcNAc...) asparagine glycan is attached at asparagine 41. 2 cysteine pairs are disulfide-bonded: cysteine 60–cysteine 64 and cysteine 79–cysteine 170.

This sequence belongs to the calycin superfamily. Lipocalin family. Post-translationally, N-glycosylated. Expressed in acinar cells of the submandibular salivary gland from where it is secreted into saliva (at protein level). Also released from the submandibular salivary gland into blood and excreted in urine (at protein level). Expressed in the lacrimal gland from where it is secreted into tears (at protein level).

It is found in the secreted. Its subcellular location is the cytoplasm. This Mesocricetus auratus (Golden hamster) protein is Male-specific submandibular salivary gland protein.